Reading from the N-terminus, the 121-residue chain is Small ribosomal subunit protein uS13 (121 aa).

The interval 90-121 (RHRRGLPTRGQNTKNNARTRKGPTKTVAGKKK) is disordered. The span at 106–121 (ARTRKGPTKTVAGKKK) shows a compositional bias: basic residues.

It belongs to the universal ribosomal protein uS13 family. As to quaternary structure, part of the 30S ribosomal subunit. Forms a loose heterodimer with protein S19. Forms two bridges to the 50S subunit in the 70S ribosome.

In terms of biological role, located at the top of the head of the 30S subunit, it contacts several helices of the 16S rRNA. In the 70S ribosome it contacts the 23S rRNA (bridge B1a) and protein L5 of the 50S subunit (bridge B1b), connecting the 2 subunits; these bridges are implicated in subunit movement. Contacts the tRNAs in the A and P-sites. The protein is Small ribosomal subunit protein uS13 of Enterococcus faecalis (strain ATCC 700802 / V583).